The sequence spans 624 residues: DNA mismatch repair protein MutL (624 aa).

Residues 355 to 377 (EESAPERKLPEKTPEPSYSPMKL) form a disordered region. Residues 358–368 (APERKLPEKTP) are compositionally biased toward basic and acidic residues.

Belongs to the DNA mismatch repair MutL/HexB family.

Its function is as follows. This protein is involved in the repair of mismatches in DNA. It is required for dam-dependent methyl-directed DNA mismatch repair. May act as a 'molecular matchmaker', a protein that promotes the formation of a stable complex between two or more DNA-binding proteins in an ATP-dependent manner without itself being part of a final effector complex. This chain is DNA mismatch repair protein MutL, found in Bacillus velezensis (strain DSM 23117 / BGSC 10A6 / LMG 26770 / FZB42) (Bacillus amyloliquefaciens subsp. plantarum).